A 258-amino-acid polypeptide reads, in one-letter code: MKTPNAQEAEGQQTRAAAGRATGSANMTKKKVSQKKQRGRPSSQPRRNIVGCRISHGWKEGDEPITQWKGTVLDQVPINPSLYLVKYDGIDCVYGLELHRDERVLSLKILSDRVASSHISDANLANTIIGKAVEHMFEGEHGSKDEWRGMVLAQAPIMKAWFYITYEKDPVLYMYQLLDDYKEGDLRIMPESSESPPTEREPGGVVDGLIGKHVEYTKEDGSKRIGMVIHQVEAKPSVYFIKFDDDFHIYVYDLVKKS.

A compositionally biased stretch (low complexity) spans 1 to 23 (MKTPNAQEAEGQQTRAAAGRATG). The interval 1–49 (MKTPNAQEAEGQQTRAAAGRATGSANMTKKKVSQKKQRGRPSSQPRRNI) is disordered. Over residues 28 to 39 (TKKKVSQKKQRG) the composition is skewed to basic residues. Tudor-like domain regions lie at residues 50–99 (VGCR…LELH), 129–178 (IGKA…YQLL), and 210–255 (IGKH…YDLV). Histone H3K4me3 and H3R8me2a binding regions lie at residues glutamate 138 and 246 to 248 (DFH).

The protein belongs to the SPIN/STSY family. As to quaternary structure, interacts with C11orf84/SPINDOC. As to expression, detected in all the examined tissues with highest expression in liver, followed by heart, stomach, kidney, skeletal muscle, placenta, and pancreas.

Its subcellular location is the nucleus. In terms of biological role, involved in the regulation of cell cycle progression, this activity is related to the inhibition of apoptosis following the removal of essential growth factors. Exhibits H3K4me3-binding activity. This Homo sapiens (Human) protein is Spindlin-2B (SPIN2B).